Consider the following 357-residue polypeptide: Ribosomal RNA large subunit methyltransferase M (357 aa).

Residues Ser-183, 216–219 (APGG), Asp-235, Asp-255, and Asp-271 each bind S-adenosyl-L-methionine. Lys-300 functions as the Proton acceptor in the catalytic mechanism.

Belongs to the class I-like SAM-binding methyltransferase superfamily. RNA methyltransferase RlmE family. RlmM subfamily. Monomer.

Its subcellular location is the cytoplasm. The enzyme catalyses cytidine(2498) in 23S rRNA + S-adenosyl-L-methionine = 2'-O-methylcytidine(2498) in 23S rRNA + S-adenosyl-L-homocysteine + H(+). Its function is as follows. Catalyzes the 2'-O-methylation at nucleotide C2498 in 23S rRNA. This chain is Ribosomal RNA large subunit methyltransferase M, found in Pseudomonas syringae pv. syringae (strain B728a).